Here is a 281-residue protein sequence, read N- to C-terminus: Pantothenate synthetase (281 aa).

30 to 37 contributes to the ATP binding site; that stretch reads MGALHAGH. The active-site Proton donor is histidine 37. Residue glutamine 64 participates in (R)-pantoate binding. Glutamine 64 provides a ligand contact to beta-alanine. 150–153 contributes to the ATP binding site; sequence GKKD. A (R)-pantoate-binding site is contributed by glutamine 156. ATP is bound by residues valine 179 and 187–190; that span reads YSSR.

It belongs to the pantothenate synthetase family. In terms of assembly, homodimer.

It is found in the cytoplasm. The enzyme catalyses (R)-pantoate + beta-alanine + ATP = (R)-pantothenate + AMP + diphosphate + H(+). Its pathway is cofactor biosynthesis; (R)-pantothenate biosynthesis; (R)-pantothenate from (R)-pantoate and beta-alanine: step 1/1. Catalyzes the condensation of pantoate with beta-alanine in an ATP-dependent reaction via a pantoyl-adenylate intermediate. In Akkermansia muciniphila (strain ATCC BAA-835 / DSM 22959 / JCM 33894 / BCRC 81048 / CCUG 64013 / CIP 107961 / Muc), this protein is Pantothenate synthetase.